Consider the following 279-residue polypeptide: NADPH-dependent 7-cyano-7-deazaguanine reductase (279 aa).

Residue 86–88 coordinates substrate; it reads IES. NADPH is bound at residue 88 to 89; sequence SK. Cys-187 acts as the Thioimide intermediate in catalysis. The active-site Proton donor is Asp-194. 226-227 provides a ligand contact to substrate; the sequence is HE. 255–256 contributes to the NADPH binding site; sequence RG.

The protein belongs to the GTP cyclohydrolase I family. QueF type 2 subfamily. In terms of assembly, homodimer.

It localises to the cytoplasm. It carries out the reaction 7-aminomethyl-7-carbaguanine + 2 NADP(+) = 7-cyano-7-deazaguanine + 2 NADPH + 3 H(+). It participates in tRNA modification; tRNA-queuosine biosynthesis. Functionally, catalyzes the NADPH-dependent reduction of 7-cyano-7-deazaguanine (preQ0) to 7-aminomethyl-7-deazaguanine (preQ1). This chain is NADPH-dependent 7-cyano-7-deazaguanine reductase, found in Actinobacillus pleuropneumoniae serotype 7 (strain AP76).